Consider the following 405-residue polypeptide: Tyrosine--tRNA ligase (405 aa).

A 'HIGH' region motif is present at residues 41-50 (PTAPDLHLGH). The 'KMSKS' region motif lies at 225–229 (KMSKS). Lys228 is a binding site for ATP. The region spanning 342 to 404 (EPLLVWVLSK…GKKGKFLKII (63 aa)) is the S4 RNA-binding domain.

The protein belongs to the class-I aminoacyl-tRNA synthetase family. TyrS type 2 subfamily. As to quaternary structure, homodimer.

It is found in the cytoplasm. It carries out the reaction tRNA(Tyr) + L-tyrosine + ATP = L-tyrosyl-tRNA(Tyr) + AMP + diphosphate + H(+). In terms of biological role, catalyzes the attachment of tyrosine to tRNA(Tyr) in a two-step reaction: tyrosine is first activated by ATP to form Tyr-AMP and then transferred to the acceptor end of tRNA(Tyr). The polypeptide is Tyrosine--tRNA ligase (Leptospira interrogans serogroup Icterohaemorrhagiae serovar Lai (strain 56601)).